Consider the following 312-residue polypeptide: Chitin deacetylase 2 (312 aa).

A signal peptide spans 1 to 44 (MRIQLNTIDLQCIIALSCLGQFVHAEANREDLKQIDFQFPVLER). Cys117 and Cys300 form a disulfide bridge. Positions 118–307 (SKLSQTFDDG…SHCVGGIDYI (190 aa)) constitute a NodB homology domain. The Proton acceptor role is filled by Asp125. Acetate is bound at residue Asp125. Position 126 (Asp126) interacts with Co(2+). Asn142 is a glycosylation site (N-linked (GlcNAc...) asparagine). 2 residues coordinate Co(2+): His172 and His176. N-linked (GlcNAc...) asparagine glycosylation is found at Asn181 and Asn199. Tyr213 lines the acetate pocket. N-linked (GlcNAc...) asparagine glycans are attached at residues Asn246 and Asn263. His273 functions as the Proton donor in the catalytic mechanism.

This sequence belongs to the polysaccharide deacetylase family. Monomer. Co(2+) is required as a cofactor. In terms of processing, N-glycosylated.

The protein localises to the prospore. It catalyses the reaction [(1-&gt;4)-N-acetyl-beta-D-glucosaminyl](n) + n H2O = chitosan + n acetate. In terms of biological role, hydrolyzes the N-acetamido groups of N-acetyl-D-glucosamine residues in chitin to form chitosan and acetate. Chitosan is a component of the spore wall. This Saccharomyces cerevisiae (strain ATCC 204508 / S288c) (Baker's yeast) protein is Chitin deacetylase 2.